A 360-amino-acid chain; its full sequence is Peptide chain release factor 1 (360 aa).

The residue at position 234 (Gln-234) is an N5-methylglutamine. Residues 285 to 305 (RAQGIAEDRKSQVGTGDRSER) are disordered.

This sequence belongs to the prokaryotic/mitochondrial release factor family. In terms of processing, methylated by PrmC. Methylation increases the termination efficiency of RF1.

It localises to the cytoplasm. Peptide chain release factor 1 directs the termination of translation in response to the peptide chain termination codons UAG and UAA. The polypeptide is Peptide chain release factor 1 (Clostridium beijerinckii (strain ATCC 51743 / NCIMB 8052) (Clostridium acetobutylicum)).